Consider the following 403-residue polypeptide: SEC14-like protein 2 (403 aa).

At lysine 51 the chain carries N6-succinyllysine. The 174-residue stretch at 76 to 249 (PPEVIQQYLS…EYGGTMTDPD (174 aa)) folds into the CRAL-TRIO domain. Lysine 253 and lysine 257 each carry N6-succinyllysine. The region spanning 275–383 (KQQYEHSVQI…AKKVNFTVEV (109 aa)) is the GOLD domain. Lysine 393 bears the N6-succinyllysine mark.

In terms of assembly, monomer. In terms of tissue distribution, widely expressed. Strong expression in liver, brain and prostate.

The protein resides in the cytoplasm. It is found in the nucleus. Its function is as follows. Carrier protein. Binds to some hydrophobic molecules and promotes their transfer between the different cellular sites. Binds with high affinity to alpha-tocopherol. Also binds with a weaker affinity to other tocopherols and to tocotrienols. May have a transcriptional activatory activity via its association with alpha-tocopherol. Probably recognizes and binds some squalene structure, suggesting that it may regulate cholesterol biosynthesis by increasing the transfer of squalene to a metabolic active pool in the cell. This chain is SEC14-like protein 2 (SEC14L2), found in Homo sapiens (Human).